We begin with the raw amino-acid sequence, 132 residues long: Riboflavin kinase (132 aa).

10–15 (GLGEGR) lines the CDP pocket. Mg(2+)-binding residues include Thr39 and Asn41. Positions 95, 96, and 103 each coordinate FMN. 108–111 (MKLR) lines the CDP pocket.

Monomer. Mg(2+) serves as cofactor.

The catalysed reaction is riboflavin + CTP = CDP + FMN + H(+). It functions in the pathway cofactor biosynthesis; FMN biosynthesis; FMN from riboflavin (CTP route): step 1/1. In terms of biological role, catalyzes the CTP-dependent phosphorylation of riboflavin (vitamin B2) to form flavin mononucleotide (FMN). Can also utilize UTP as the phosphate donor, although less efficiently, and it is unclear if ATP and GTP can also serve as substrates or not. In Methanocaldococcus jannaschii (strain ATCC 43067 / DSM 2661 / JAL-1 / JCM 10045 / NBRC 100440) (Methanococcus jannaschii), this protein is Riboflavin kinase (ribK).